The primary structure comprises 219 residues: MGMSSLKLLKFVLFFFNLIFWFCGCCILGLGIYLLIHSKFGVLFHNLPSLTLGNVLVIVGSVIMVVAFLGCMGSIKENKCLLMSFFVLLLIILLAEVTLAILLFVYEQKLKEYVAEGLTESIQRYNSDNSTKAAWDSIQSFLQCCGVNGTSDWTSGPPASCPKGSAVKGCYIQAKQWFHSNFLYIGITTICVCVIQVLGMSFALTLNCQIDKTSQVLGL.

The Cytoplasmic segment spans residues 1–11; sequence MGMSSLKLLKF. Residues 12 to 32 traverse the membrane as a helical segment; the sequence is VLFFFNLIFWFCGCCILGLGI. At 33 to 54 the chain is on the extracellular side; that stretch reads YLLIHSKFGVLFHNLPSLTLGN. A helical transmembrane segment spans residues 55–69; the sequence is VLVIVGSVIMVVAFL. The Cytoplasmic portion of the chain corresponds to 70 to 80; the sequence is GCMGSIKENKC. A helical membrane pass occupies residues 81–106; the sequence is LLMSFFVLLLIILLAEVTLAILLFVY. The Extracellular portion of the chain corresponds to 107 to 181; that stretch reads EQKLKEYVAE…IQAKQWFHSN (75 aa). Asn-129 and Asn-148 each carry an N-linked (GlcNAc...) asparagine glycan. Residues 182–206 form a helical membrane-spanning segment; the sequence is FLYIGITTICVCVIQVLGMSFALTL. The Cytoplasmic portion of the chain corresponds to 207-219; that stretch reads NCQIDKTSQVLGL.

The protein belongs to the tetraspanin (TM4SF) family. As to quaternary structure, interacts with SCIMP. Interacts with CD45/PTPRC. Interacts with IL7R. Interacts with RBL2 and PPP2CA.

Its subcellular location is the cell membrane. It is found in the cell junction. It localises to the membrane. The protein resides in the synapse. Structural component of specialized membrane microdomains known as tetraspanin-enriched microdomains (TERMs), which act as platforms for receptor clustering and signaling. Participates thereby in diverse biological functions such as cell signal transduction, adhesion, migration and protein trafficking. Plays a role in the activation of monocytes and B-cells. Acts as an essential regulator of B-cell development by promoting interleukin-7 receptor/IL7R signaling. Also promotes, in B-cells, the BCR signaling by recruiting PKC to the plasma membrane in order to phosphorylate its substrates. Plays an essential role in B- and T-cells homing to lymph nodes by stabilizing L-selectin/SELL cell surface expression. Also mediates metabolic and inflammatory functions in hepatocytes and adipose tissue by promoting TNF-alpha and LPS signaling independent of the immune compartment. The chain is Leukocyte surface antigen CD53 (CD53) from Bos taurus (Bovine).